The following is a 358-amino-acid chain: Trace amine-associated receptor 7d (358 aa).

At 1–47 the chain is on the extracellular side; it reads MRVDDDRFPWDQDSILSRDLLSASSLQLCYENLNRSCVRSPYSPGPR. The N-linked (GlcNAc...) asparagine glycan is linked to asparagine 34. 2 disulfide bridges follow: cysteine 37-cysteine 201 and cysteine 120-cysteine 205. Residues 48–68 traverse the membrane as a helical segment; sequence LILYAVFGFGAVLAVCGNLMV. Residues 69–83 lie on the Cytoplasmic side of the membrane; it reads MTSILHFRQLHSPAN. Residues 84–104 traverse the membrane as a helical segment; that stretch reads FLVASLACADFLVGLTVMPFS. Residues 105-122 lie on the Extracellular side of the membrane; it reads MVRSVEGCWYFGDTYCKL. Residues 123 to 143 form a helical membrane-spanning segment; it reads HTCFDVSFCYCSLFHLCFISV. Topologically, residues 144–166 are cytoplasmic; the sequence is DRYIAVSDPLIYPTRFTASVSGK. The helical transmembrane segment at 167 to 187 threads the bilayer; sequence CITFSWLLSIIYGFPLIYTGA. Topologically, residues 188-212 are extracellular; sequence SEAGLEDLVSALTCVGGCQIPMNQK. Residues 213–233 traverse the membrane as a helical segment; the sequence is FVLINFLLFLVPTLVMMTVYS. Residues 234–274 are Cytoplasmic-facing; the sequence is KIFLIARQQAQNIEKMRKQTARASESYKDRVCKRERKAAKT. The helical transmembrane segment at 275 to 295 threads the bilayer; that stretch reads LGIAVAAFLLSWLPYFIDSII. The Extracellular segment spans residues 296-309; the sequence is DAFLGFITPTYVYE. A helical membrane pass occupies residues 310 to 333; the sequence is ILIWIVYYNSSMNPLIYAFFYPWF. The Cytoplasmic segment spans residues 334–358; it reads RKATKLIVTGKILRENSSTINLFPE.

It belongs to the G-protein coupled receptor 1 family.

Its subcellular location is the cell membrane. Its function is as follows. Olfactory receptor specific for N,N-dimethylalkylamines trace amines, such as N,N-dimethylcyclohexylamine. Trace amine compounds are enriched in animal body fluids and act on trace amine-associated receptors (TAARs) to elicit both intraspecific and interspecific innate behaviors. Ligand-binding causes a conformation change that triggers signaling via G(s)-class of G alpha proteins (GNAL or GNAS). The protein is Trace amine-associated receptor 7d of Rattus norvegicus (Rat).